A 346-amino-acid chain; its full sequence is Holliday junction branch migration complex subunit RuvB (346 aa).

The span at 1–11 (MTEQRTIASSA) shows a compositional bias: polar residues. Residues 1–20 (MTEQRTIASSATREDEAADA) form a disordered region. The segment at 1–183 (MTEQRTIASS…FGIVQRLEFY (183 aa)) is large ATPase domain (RuvB-L). ATP contacts are provided by residues I22, R23, G64, K67, T68, T69, 130–132 (EDF), R173, Y183, and R220. Position 68 (T68) interacts with Mg(2+). Residues 184–254 (SPQELTRIVI…VAQAAMQMLK (71 aa)) form a small ATPAse domain (RuvB-S) region. The segment at 257–346 (PEGFDELDRR…PAIGEPGDLF (90 aa)) is head domain (RuvB-H). R293, R312, and R317 together coordinate DNA.

Belongs to the RuvB family. In terms of assembly, homohexamer. Forms an RuvA(8)-RuvB(12)-Holliday junction (HJ) complex. HJ DNA is sandwiched between 2 RuvA tetramers; dsDNA enters through RuvA and exits via RuvB. An RuvB hexamer assembles on each DNA strand where it exits the tetramer. Each RuvB hexamer is contacted by two RuvA subunits (via domain III) on 2 adjacent RuvB subunits; this complex drives branch migration. In the full resolvosome a probable DNA-RuvA(4)-RuvB(12)-RuvC(2) complex forms which resolves the HJ.

It localises to the cytoplasm. The enzyme catalyses ATP + H2O = ADP + phosphate + H(+). The RuvA-RuvB-RuvC complex processes Holliday junction (HJ) DNA during genetic recombination and DNA repair, while the RuvA-RuvB complex plays an important role in the rescue of blocked DNA replication forks via replication fork reversal (RFR). RuvA specifically binds to HJ cruciform DNA, conferring on it an open structure. The RuvB hexamer acts as an ATP-dependent pump, pulling dsDNA into and through the RuvAB complex. RuvB forms 2 homohexamers on either side of HJ DNA bound by 1 or 2 RuvA tetramers; 4 subunits per hexamer contact DNA at a time. Coordinated motions by a converter formed by DNA-disengaged RuvB subunits stimulates ATP hydrolysis and nucleotide exchange. Immobilization of the converter enables RuvB to convert the ATP-contained energy into a lever motion, pulling 2 nucleotides of DNA out of the RuvA tetramer per ATP hydrolyzed, thus driving DNA branch migration. The RuvB motors rotate together with the DNA substrate, which together with the progressing nucleotide cycle form the mechanistic basis for DNA recombination by continuous HJ branch migration. Branch migration allows RuvC to scan DNA until it finds its consensus sequence, where it cleaves and resolves cruciform DNA. This Xanthomonas campestris pv. campestris (strain B100) protein is Holliday junction branch migration complex subunit RuvB.